A 93-amino-acid chain; its full sequence is MSRSVKKGPYVDPKLLKKIVEMNKKNEKKVIKTWSRSSTIVPEMVGHTIAVHDGRKHVPVYITEAMVGHKLGEFAPTRTFHGHADTEKTSKVK.

It belongs to the universal ribosomal protein uS19 family.

Functionally, protein S19 forms a complex with S13 that binds strongly to the 16S ribosomal RNA. This Thermoanaerobacter pseudethanolicus (strain ATCC 33223 / 39E) (Clostridium thermohydrosulfuricum) protein is Small ribosomal subunit protein uS19.